Consider the following 241-residue polypeptide: Xyloglucan-specific endo-beta-1,4-glucanase A (241 aa).

The N-terminal stretch at 1–16 (MKVLALSALLSLASAA) is a signal peptide. N-linked (GlcNAc...) asparagine glycosylation occurs at Asn-47.

It belongs to the glycosyl hydrolase 12 (cellulase H) family.

The protein resides in the secreted. It catalyses the reaction xyloglucan + H2O = xyloglucan oligosaccharides.. Catalyzes endohydrolysis of 1,4-beta-D-glucosidic linkages in xyloglucan with retention of the beta-configuration of the glycosyl residues. Specific for xyloglucan and does not hydrolyze other cell wall components. This is Xyloglucan-specific endo-beta-1,4-glucanase A (xgeA) from Aspergillus niger.